The primary structure comprises 288 residues: Serpentine receptor class gamma-1 (288 aa).

7 helical membrane-spanning segments follow: residues leucine 25–isoleucine 45, phenylalanine 59–phenylalanine 79, phenylalanine 118–leucine 138, leucine 148–isoleucine 168, phenylalanine 197–isoleucine 217, valine 238–leucine 258, and isoleucine 268–methionine 288.

The protein belongs to the nematode receptor-like protein srg family.

Its subcellular location is the membrane. The sequence is that of Serpentine receptor class gamma-1 (srg-1) from Caenorhabditis elegans.